The primary structure comprises 323 residues: Glyoxylate/hydroxypyruvate reductase B (323 aa).

Residues Arg-237 and Glu-266 contribute to the active site. The active-site Proton donor is the His-285.

It belongs to the D-isomer specific 2-hydroxyacid dehydrogenase family. GhrB subfamily. In terms of assembly, homodimer.

The protein localises to the cytoplasm. The enzyme catalyses glycolate + NADP(+) = glyoxylate + NADPH + H(+). It catalyses the reaction (R)-glycerate + NAD(+) = 3-hydroxypyruvate + NADH + H(+). The catalysed reaction is (R)-glycerate + NADP(+) = 3-hydroxypyruvate + NADPH + H(+). Its function is as follows. Catalyzes the NADPH-dependent reduction of glyoxylate and hydroxypyruvate into glycolate and glycerate, respectively. The protein is Glyoxylate/hydroxypyruvate reductase B of Klebsiella pneumoniae (strain 342).